Reading from the N-terminus, the 323-residue chain is MSRPRMRLVVTADDFGYCPRRDEGIVEAFLAGAVTSVSLLVNGAATESAAELARRHSIPTGLHANLSEGRPVGPARRGASSLLGPEGFFLGKMGFREAVAAGDVDLPQVREELEAQLSCFRELLGRAPTHADGHQHVHVLPGVCQVFAEALQAYGVRFTRLPLERGVGGCTWLEAPARAFACAVERDARAAVGPFSRHGLRWTDAFVGLSTCGRHMSAHRVSGALARVLEGTLAGHTLTAELMAHPGYPSVPPTGGCGEGPDAFSCSWERLHELRVLTAPTLRAQLAQDGVQLCALDDLDSKRPGEEVPCEPTLEPFLEPSLL.

D13 (proton acceptor) is an active-site residue. The Mg(2+) site is built by D14 and H134.

This sequence belongs to the YdjC deacetylase family. Mg(2+) is required as a cofactor.

Probably catalyzes the deacetylation of acetylated carbohydrates an important step in the degradation of oligosaccharides. This is Carbohydrate deacetylase (YDJC) from Homo sapiens (Human).